A 365-amino-acid polypeptide reads, in one-letter code: Peptide chain release factor 2 (365 aa).

Residue Q252 is modified to N5-methylglutamine.

The protein belongs to the prokaryotic/mitochondrial release factor family. Methylated by PrmC. Methylation increases the termination efficiency of RF2.

The protein resides in the cytoplasm. Functionally, peptide chain release factor 2 directs the termination of translation in response to the peptide chain termination codons UGA and UAA. This chain is Peptide chain release factor 2, found in Aeromonas salmonicida (strain A449).